Reading from the N-terminus, the 437-residue chain is Proline--tRNA ligase (437 aa).

Belongs to the class-II aminoacyl-tRNA synthetase family. ProS type 2 subfamily. Homodimer.

Its subcellular location is the cytoplasm. The catalysed reaction is tRNA(Pro) + L-proline + ATP = L-prolyl-tRNA(Pro) + AMP + diphosphate. Functionally, catalyzes the attachment of proline to tRNA(Pro) in a two-step reaction: proline is first activated by ATP to form Pro-AMP and then transferred to the acceptor end of tRNA(Pro). This Rhizorhabdus wittichii (strain DSM 6014 / CCUG 31198 / JCM 15750 / NBRC 105917 / EY 4224 / RW1) (Sphingomonas wittichii) protein is Proline--tRNA ligase.